The sequence spans 152 residues: 1,4-dihydroxy-2-naphthoyl-CoA hydrolase (152 aa).

The active site involves aspartate 20.

It belongs to the 4-hydroxybenzoyl-CoA thioesterase family. DHNA-CoA hydrolase subfamily.

It catalyses the reaction 1,4-dihydroxy-2-naphthoyl-CoA + H2O = 1,4-dihydroxy-2-naphthoate + CoA + H(+). Its pathway is cofactor biosynthesis; phylloquinone biosynthesis. The protein operates within quinol/quinone metabolism; 1,4-dihydroxy-2-naphthoate biosynthesis; 1,4-dihydroxy-2-naphthoate from chorismate: step 7/7. In terms of biological role, catalyzes the hydrolysis of 1,4-dihydroxy-2-naphthoyl-CoA (DHNA-CoA) to 1,4-dihydroxy-2-naphthoate (DHNA), a reaction involved in phylloquinone (vitamin K1) biosynthesis. This chain is 1,4-dihydroxy-2-naphthoyl-CoA hydrolase, found in Synechococcus sp. (strain CC9311).